Here is a 142-residue protein sequence, read N- to C-terminus: Holo-[acyl-carrier-protein] synthase (142 aa).

Residues Asp8 and Glu57 each coordinate Mg(2+).

This sequence belongs to the P-Pant transferase superfamily. AcpS family. Mg(2+) serves as cofactor.

Its subcellular location is the cytoplasm. It carries out the reaction apo-[ACP] + CoA = holo-[ACP] + adenosine 3',5'-bisphosphate + H(+). Transfers the 4'-phosphopantetheine moiety from coenzyme A to a Ser of acyl-carrier-protein. This is Holo-[acyl-carrier-protein] synthase from Maricaulis maris (strain MCS10) (Caulobacter maris).